We begin with the raw amino-acid sequence, 394 residues long: Anthocyanidin 3-O-glucosyltransferase 6 (394 aa).

Catalysis depends on Asp-37, which acts as the Charge relay. Residues Thr-59, Ala-267, Gln-269, His-284, Trp-287, Asn-288, Ser-289, and Glu-292 each coordinate UDP-alpha-D-glucose. Ala-307 contacts an anthocyanidin. UDP-alpha-D-glucose is bound by residues Glu-308 and Gln-309.

It belongs to the UDP-glycosyltransferase family. As to expression, expressed in cotyledons and leaves.

It carries out the reaction an anthocyanidin + UDP-alpha-D-glucose + H(+) = an anthocyanidin 3-O-beta-D-glucoside + UDP. The protein operates within pigment biosynthesis; anthocyanin biosynthesis. Functionally, in the presence of other necessary color factors, this glycosylation reaction allows the accumulation of anthocyanin pigments. May be involved in glycosylation of unstable cyanohydrins to produce stable cyanoglucosides. The sequence is that of Anthocyanidin 3-O-glucosyltransferase 6 (GT6) from Manihot esculenta (Cassava).